The primary structure comprises 1212 residues: DNA-directed RNA polymerase subunit beta (1212 aa).

Over residues 1176-1195 (QQEKKKLAEEAAKKDDKSAE) the composition is skewed to basic and acidic residues. A disordered region spans residues 1176 to 1212 (QQEKKKLAEEAAKKDDKSAEPVDQSDSSTSSDDKVSK).

Belongs to the RNA polymerase beta chain family. In terms of assembly, the RNAP catalytic core consists of 2 alpha, 1 beta, 1 beta' and 1 omega subunit. When a sigma factor is associated with the core the holoenzyme is formed, which can initiate transcription.

The enzyme catalyses RNA(n) + a ribonucleoside 5'-triphosphate = RNA(n+1) + diphosphate. In terms of biological role, DNA-dependent RNA polymerase catalyzes the transcription of DNA into RNA using the four ribonucleoside triphosphates as substrates. The polypeptide is DNA-directed RNA polymerase subunit beta (Lactobacillus gasseri (strain ATCC 33323 / DSM 20243 / BCRC 14619 / CIP 102991 / JCM 1131 / KCTC 3163 / NCIMB 11718 / NCTC 13722 / AM63)).